Consider the following 132-residue polypeptide: Small ribosomal subunit protein uS8 (132 aa).

This sequence belongs to the universal ribosomal protein uS8 family. In terms of assembly, part of the 30S ribosomal subunit. Contacts proteins S5 and S12.

Its function is as follows. One of the primary rRNA binding proteins, it binds directly to 16S rRNA central domain where it helps coordinate assembly of the platform of the 30S subunit. The chain is Small ribosomal subunit protein uS8 from Kocuria rhizophila (strain ATCC 9341 / DSM 348 / NBRC 103217 / DC2201).